A 129-amino-acid chain; its full sequence is Chromatin accessibility complex protein 1 (129 aa).

N-acetylalanine is present on A2. The residue at position 102 (K102) is an N6-acetyllysine. Residues 104-120 are a coiled coil; it reads LKMLKEKREEEEDNEDD. The disordered stretch occupies residues 109–129; sequence EKREEEEDNEDDGSDLGEALA. A compositionally biased stretch (acidic residues) spans 112–123; it reads EEEEDNEDDGSD. S122 is subject to Phosphoserine.

As to quaternary structure, heterodimer with POLE3; binds to DNA. Component of the CHRAC ISWI chromatin remodeling complex at least composed of SMARCA5/SNF2H, BAZ1A/ACF1, CHRAC1 and POLE3; the complex preferentially binds DNA through the CHRAC1-POLE3 heterodimer and possesses ATP-dependent nucleosome-remodeling activity. Within the complex, the heterodimer with POLE3 interacts with SMARCA5/SNF2H; the interaction is direct and enhances nucleosome sliding activity by the SMARCA5/SNF2H and BAZ1A/ACF1 interaction. Within the complex, the heterodimer with POLE3 interacts with BAZ1A/ACF1; the interactions are direct. Ubiquitously expressed.

It localises to the nucleus. Forms a complex with DNA polymerase epsilon subunit POLE3 and binds naked DNA, which is then incorporated into chromatin, aided by the nucleosome remodeling activity of ISWI/SNF2H and ACF1. Does not enhance nucleosome sliding activity of the ACF-5 ISWI chromatin remodeling complex. The protein is Chromatin accessibility complex protein 1 (Chrac1) of Mus musculus (Mouse).